Here is a 349-residue protein sequence, read N- to C-terminus: Ion-translocating oxidoreductase complex subunit D (349 aa).

The next 3 helical transmembrane spans lie at 20 to 42 (VMQRVILCLLPGLVVQCAFFGWG), 77 to 99 (SAMLTAILIGVAIPPLAPWWMIV), and 124 to 144 (AMAAYVLLLVSFPVQMTTWIA). T185 carries the post-translational modification FMN phosphoryl threonine. A run of 5 helical transmembrane segments spans residues 212–232 (STGVGWFWVNLAYLAGGLVLL), 239–259 (WHISTGVLLGLFVASSIGFLL), 265–285 (ASPLMHLFSGATMLAAFFIAT), 291–311 (ATSSRGRIIFGALIGVLVYII), and 315–335 (GGYPDAFAFAVLLANLCAPFI).

This sequence belongs to the NqrB/RnfD family. As to quaternary structure, the complex is composed of six subunits: RnfA, RnfB, RnfC, RnfD, RnfE and RnfG. Requires FMN as cofactor.

Its subcellular location is the cell inner membrane. Functionally, part of a membrane-bound complex that couples electron transfer with translocation of ions across the membrane. In Shewanella baltica (strain OS223), this protein is Ion-translocating oxidoreductase complex subunit D.